We begin with the raw amino-acid sequence, 219 residues long: Vesicle-associated membrane protein 712 (219 aa).

Residues 1–189 (MSILYALVAR…NNTVWWRNCK (189 aa)) lie on the Cytoplasmic side of the membrane. The 105-residue stretch at 7-111 (LVARGTVVLA…AMNDEFSRVL (105 aa)) folds into the Longin domain. A v-SNARE coiled-coil homology domain is found at 126–186 (TISRIKGEMN…RRFNNTVWWR (61 aa)). Residues 190–210 (LTLLLILVLLVIIYIGVAFAC) traverse the membrane as a helical; Anchor for type IV membrane protein segment. Residues 211 to 219 (HGPTLPSCV) lie on the Vesicular side of the membrane.

Belongs to the synaptobrevin family. Expressed in flowers, leaves, stems and roots.

It is found in the vacuole membrane. It localises to the prevacuolar compartment membrane. Its function is as follows. Involved in the targeting and/or fusion of transport vesicles to their target membrane. The chain is Vesicle-associated membrane protein 712 from Arabidopsis thaliana (Mouse-ear cress).